Consider the following 429-residue polypeptide: Ribonuclease E/G-like protein (429 aa).

The Mg(2+) site is built by Asp290 and Asp332.

It belongs to the RNase E/G family. It depends on Mg(2+) as a cofactor.

Its subcellular location is the plastid. The protein localises to the chloroplast stroma. Involved in intercistronic processing of primary transcripts from chloroplast operons. The endonucleolytic activity of the enzyme depends on the number of phosphates at the 5' end, is inhibited by structured RNA, and preferentially cleaves A/U-rich sequences. The sequence is that of Ribonuclease E/G-like protein (rne) from Guillardia theta (Cryptophyte).